We begin with the raw amino-acid sequence, 854 residues long: Iron and copper transporter IacT (854 aa).

The TonB box motif lies at 187–194; that stretch reads IELIVTAQ. Residues 199 to 315 enclose the TBDR plug domain; that stretch reads DAQDVPLSLT…PAGVVNVISR (117 aa). The TBDR beta-barrel domain maps to 320–854; it reads QPEMRISALY…TYGVRVSASF (535 aa). The short motif at 839-854 is the TonB C-terminal box element; that stretch reads GFGDPVTYGVRVSASF.

Belongs to the TonB-dependent receptor family.

The protein localises to the cell outer membrane. Involved in the TonB-dependent uptake of copper and iron under conditions in which the concentration of copper exceeds that of the iron. This is Iron and copper transporter IacT from Nostoc sp. (strain PCC 7120 / SAG 25.82 / UTEX 2576).